We begin with the raw amino-acid sequence, 82 residues long: Large ribosomal subunit protein uL23 (82 aa).

It belongs to the universal ribosomal protein uL23 family. In terms of assembly, part of the 50S ribosomal subunit. Contacts protein L29.

Functionally, binds to 23S rRNA. One of the proteins that surrounds the polypeptide exit tunnel on the outside of the ribosome. In Methanospirillum hungatei JF-1 (strain ATCC 27890 / DSM 864 / NBRC 100397 / JF-1), this protein is Large ribosomal subunit protein uL23.